A 234-amino-acid chain; its full sequence is Carboxymethylenebutenolidase 1 (234 aa).

Catalysis depends on residues cysteine 123, aspartate 171, and histidine 201.

It belongs to the dienelactone hydrolase family. Monomer.

The enzyme catalyses 2-(5-oxo-2,5-dihydrofuran-2-ylidene)acetate + H2O = 4-oxohex-2-enedioate + H(+). The protein operates within aromatic compound metabolism; 3-chlorocatechol degradation. Functionally, ring cleavage of cyclic ester dienelactone to produce maleylacetate. The polypeptide is Carboxymethylenebutenolidase 1 (tfdEI) (Cupriavidus pinatubonensis (strain JMP 134 / LMG 1197) (Cupriavidus necator (strain JMP 134))).